A 65-amino-acid polypeptide reads, in one-letter code: Ferredoxin-1 (65 aa).

The region spanning 2-30 (AMKIDPELCTSCGDCEPVCPTNAIAPKKG) is the 4Fe-4S ferredoxin-type domain. Residues Cys10, Cys13, Cys16, Cys20, Cys39, Cys42, Cys51, and Cys55 each contribute to the [4Fe-4S] cluster site.

Requires [4Fe-4S] cluster as cofactor.

Ferredoxins are iron-sulfur proteins that transfer electrons in a wide variety of metabolic reactions. This ferredoxin probably participates in nitrogen fixation. In Rhodobacter capsulatus (Rhodopseudomonas capsulata), this protein is Ferredoxin-1 (fdxN).